The primary structure comprises 102 residues: NADH-quinone oxidoreductase subunit K 2 (102 aa).

Helical transmembrane passes span 6 to 26 (LEAF…GIIA), 30 to 50 (LVTV…ALVG), and 66 to 86 (FIIA…IAIF).

This sequence belongs to the complex I subunit 4L family. NDH-1 is composed of 14 different subunits. Subunits NuoA, H, J, K, L, M, N constitute the membrane sector of the complex.

Its subcellular location is the cell inner membrane. It catalyses the reaction a quinone + NADH + 5 H(+)(in) = a quinol + NAD(+) + 4 H(+)(out). NDH-1 shuttles electrons from NADH, via FMN and iron-sulfur (Fe-S) centers, to quinones in the respiratory chain. The immediate electron acceptor for the enzyme in this species is believed to be ubiquinone. Couples the redox reaction to proton translocation (for every two electrons transferred, four hydrogen ions are translocated across the cytoplasmic membrane), and thus conserves the redox energy in a proton gradient. This Aquifex aeolicus (strain VF5) protein is NADH-quinone oxidoreductase subunit K 2.